Here is a 244-residue protein sequence, read N- to C-terminus: Putative quercetin 2,3-dioxygenase Mb0187c (244 aa).

Positions 60, 62, 104, and 106 each coordinate a divalent metal cation.

It belongs to the pirin family. Requires a divalent metal cation as cofactor.

The enzyme catalyses quercetin + O2 = 2-(3,4-dihydroxybenzoyloxy)-4,6-dihydroxybenzoate + CO. The protein operates within flavonoid metabolism; quercetin degradation. In terms of biological role, putative quercetin 2,3-dioxygenase. This Mycobacterium bovis (strain ATCC BAA-935 / AF2122/97) protein is Putative quercetin 2,3-dioxygenase Mb0187c.